The following is a 552-amino-acid chain: N-acetylglucosamine-6-sulfatase (552 aa).

The first 36 residues, 1 to 36 (MRLLPLAPGRLRRGSPRHLPSCSPALLLLVLGGCLG), serve as a signal peptide directing secretion. Residues Asp-55, Asp-56, and Cys-91 each contribute to the Ca(2+) site. Catalysis depends on Cys-91, which acts as the Nucleophile. A 3-oxoalanine (Cys) modification is found at Cys-91. N-linked (GlcNAc...) asparagine glycosylation is found at Asn-111, Asn-117, Asn-183, Asn-198, Asn-210, Asn-279, and Asn-317. Residues Asp-326 and Asn-327 each coordinate Ca(2+). N-linked (GlcNAc...) asparagine glycans are attached at residues Asn-362, Asn-387, Asn-405, Asn-422, Asn-449, and Asn-480. Residue Ser-541 is modified to Phosphoserine.

Belongs to the sulfatase family. Ca(2+) is required as a cofactor. Post-translationally, the form A (78 kDa) is processed by internal peptidase cleavage to a 32 kDa N-terminal species (form B) and a 48 kDa C-terminal species. In terms of processing, the conversion to 3-oxoalanine (also known as C-formylglycine, FGly), of a serine or cysteine residue in prokaryotes and of a cysteine residue in eukaryotes, is critical for catalytic activity.

Its subcellular location is the lysosome. The enzyme catalyses Hydrolysis of the 6-sulfate groups of the N-acetyl-D-glucosamine 6-sulfate units of heparan sulfate and keratan sulfate.. Hydrolyzes 6-sulfate groups in N-acetyl-d-glucosaminide units of heparin sulfate and keratan sulfate. The polypeptide is N-acetylglucosamine-6-sulfatase (GNS) (Homo sapiens (Human)).